We begin with the raw amino-acid sequence, 434 residues long: Enolase (434 aa).

Substrate-binding residues include H158 and E167. E210 (proton donor) is an active-site residue. Mg(2+) is bound by residues D245, E294, and D319. 2 residues coordinate substrate: E294 and D319. Catalysis depends on K344, which acts as the Proton acceptor. Residues 371–374 (SHRS) and K395 each bind substrate.

It belongs to the enolase family. In terms of assembly, homodimer. Mg(2+) is required as a cofactor.

The protein localises to the cytoplasm. The enzyme catalyses (2R)-2-phosphoglycerate = phosphoenolpyruvate + H2O. The protein operates within carbohydrate degradation; glycolysis; pyruvate from D-glyceraldehyde 3-phosphate: step 4/5. The polypeptide is Enolase (Doryteuthis pealeii (Longfin inshore squid)).